The following is a 548-amino-acid chain: Probable sucrose-6-phosphate hydrolase (548 aa).

Residues 105-108, Gln124, 167-168, 228-229, and Glu283 each bind substrate; these read LLND, FS, and RD. Asp108 is an active-site residue.

Belongs to the glycosyl hydrolase 32 family.

The protein localises to the cytoplasm. The catalysed reaction is Hydrolysis of terminal non-reducing beta-D-fructofuranoside residues in beta-D-fructofuranosides.. It participates in glycan biosynthesis; sucrose metabolism. In terms of biological role, enables the bacterium to metabolize sucrose as a sole carbon source. This is Probable sucrose-6-phosphate hydrolase from Vibrio cholerae serotype O1 (strain ATCC 39315 / El Tor Inaba N16961).